Consider the following 408-residue polypeptide: DNA-directed RNA polymerase subunit Rpo1C (408 aa).

It belongs to the RNA polymerase beta' chain family. As to quaternary structure, part of the RNA polymerase complex.

The protein localises to the cytoplasm. It carries out the reaction RNA(n) + a ribonucleoside 5'-triphosphate = RNA(n+1) + diphosphate. Functionally, DNA-dependent RNA polymerase (RNAP) catalyzes the transcription of DNA into RNA using the four ribonucleoside triphosphates as substrates. Forms part of the jaw domain. The chain is DNA-directed RNA polymerase subunit Rpo1C from Methanosarcina mazei (strain ATCC BAA-159 / DSM 3647 / Goe1 / Go1 / JCM 11833 / OCM 88) (Methanosarcina frisia).